The sequence spans 305 residues: RNA-binding protein with serine-rich domain 1 (305 aa).

The segment covering 1-10 (MDLSGVKKKS) has biased composition (basic residues). The segment at 1–161 (MDLSGVKKKS…KRRSPSPKPT (161 aa)) is necessary for interaction with SRP54, nuclear localization and exon-skipping. Residues 1–170 (MDLSGVKKKS…TKVHIGRLTR (170 aa)) are disordered. The interval 1-220 (MDLSGVKKKS…ENPDEAEKAL (220 aa)) is necessary for interaction with the cleaved p110 isoform of CDC2L1. Glycyl lysine isopeptide (Lys-Gly) (interchain with G-Cter in SUMO2) cross-links involve residues lysine 7 and lysine 15. The span at 33 to 59 (DRSDEKSKDRSKDKGATKESSEKDRGR) shows a compositional bias: basic and acidic residues. At serine 53 the chain carries Phosphoserine. Residues 68-126 (ASSGSSSTRSRSSSTSSSGSSTSTGSSSGSSSSSASSRSGSSSTSRSSSSSSSSGSPSP) are compositionally biased toward low complexity. Residues 69-121 (SSGSSSTRSRSSSTSSSGSSTSTGSSSGSSSSSASSRSGSSSTSRSSSSSSSS) are necessary for interactions with UPF2 and UPF3B and UPF2-dependent NMD. Basic residues-rich tracts occupy residues 127–143 (SRRR…KSKP) and 151–167 (RKRR…HIGR). Phosphoserine occurs at positions 155 and 157. The interval 156–242 (PSPKPTKVHI…ITATAVLAPW (87 aa)) is necessary for interaction with PNN and exon-skipping. Residues 159–244 (KPTKVHIGRL…ATAVLAPWPR (86 aa)) form an interaction with SAP18 and ACIN1 region. Threonine 161 bears the Phosphothreonine mark. The RRM domain occupies 161 to 240 (TKVHIGRLTR…QEITATAVLA (80 aa)). Lysine 218 is subject to N6-acetyllysine. A necessary for interaction with TRA2B, nuclear localization and exon-skipping region spans residues 238-305 (VLAPWPRPPP…RSRSSSNSSR (68 aa)). The segment at 240–305 (APWPRPPPRR…RSRSSSNSSR (66 aa)) is disordered. Over residues 242–261 (WPRPPPRRFSPPRRMLPPLP) the composition is skewed to pro residues. Over residues 266-298 (SPPRMRRRSRSPRRRSPARRRSRSPGRRRHRSR) the composition is skewed to basic residues.

It belongs to the splicing factor SR family. In terms of assembly, found in mRNA splicing-dependent exon junction complexes (EJC). Found in a post-splicing complex with NXF1, RBM8A, UPF1, UPF2, UPF3A, UPF3B and RNPS1. Component of the heterotrimeric ASAP (apoptosis- and splicing-associated protein) and PSAP complexes consisting of RNPS1, SAP18 and either ACIN1 or PNN, respectively; the ASAP and PSAP complexes probably are formed mutually exclusive. Component of the active spliceosome. Associates with polysomes. Interacts with the cleaved p110 isoform of CDC2L1, CSNK2A1, PNN, SART3, SRP54, SRRM1 and TRA2B/SFRS10. Phosphorylated on one or more of the four Ser/Thr residues (Ser-43, Thr-49, Ser-52 or Ser-53). Ser-53 phosphorylation site is important for splicing and translation stimulation activity in vitro.

It localises to the nucleus. It is found in the nucleus speckle. The protein localises to the cytoplasm. Functionally, part of pre- and post-splicing multiprotein mRNP complexes. Auxiliary component of the splicing-dependent multiprotein exon junction complex (EJC) deposited at splice junction on mRNAs. The EJC is a dynamic structure consisting of core proteins and several peripheral nuclear and cytoplasmic associated factors that join the complex only transiently either during EJC assembly or during subsequent mRNA metabolism. Component of the ASAP and PSAP complexes which bind RNA in a sequence-independent manner and are proposed to be recruited to the EJC prior to or during the splicing process and to regulate specific excision of introns in specific transcription subsets. The ASAP complex can inhibit RNA processing during in vitro splicing reactions. The ASAP complex promotes apoptosis and is disassembled after induction of apoptosis. Enhances the formation of the ATP-dependent A complex of the spliceosome. Involved in both constitutive splicing and, in association with SRP54 and TRA2B/SFRS10, in distinctive modulation of alternative splicing in a substrate-dependent manner. Involved in the splicing modulation of BCL2L1/Bcl-X (and probably other apoptotic genes); specifically inhibits formation of proapoptotic isoforms such as Bcl-X(S); the activity is different from the established EJC assembly and function. Participates in mRNA 3'-end cleavage. Involved in UPF2-dependent nonsense-mediated decay (NMD) of mRNAs containing premature stop codons. Also mediates increase of mRNA abundance and translational efficiency. Binds spliced mRNA 20-25 nt upstream of exon-exon junctions. The protein is RNA-binding protein with serine-rich domain 1 (RNPS1) of Bos taurus (Bovine).